The sequence spans 267 residues: MTIPAFGLGTFRLKDDVVIASVKTALELGYRAVDTAQIYDNEAAVGQAIAESGVPRNELYITTKIWIENLSKDKLIPSLKESLKKLRTDYVDLTLIHWPSPGDAVSVEEFMQALLEAKKQGLTREIGISNFTIPLMEKAIAAVGADHIATNQIELSPYLQNRKVVDWAKAHGIHITSYMTLAYGKALKDEVIARIAVKHNATPVQVILAWAMGEGYSVIPSSTRRENLASNLLAQDLHLDAEDKNAIAALDCNDRLVSPEGLAPAWD.

Tyrosine 39 (proton donor) is an active-site residue. Position 97 (histidine 97) interacts with substrate. 179-231 is a binding site for NADP(+); sequence MTLAYGKALKDEVIARIAVKHNATPVQVILAWAMGEGYSVIPSSTRRENLASN.

Belongs to the aldo/keto reductase family. As to quaternary structure, monomer.

It localises to the cytoplasm. It catalyses the reaction hydroxyacetone + NADP(+) = methylglyoxal + NADPH + H(+). Aldo-keto reductase that significantly contributes to cellular methylglyoxal detoxification by catalyzing the NADPH-dependent conversion of methylglyoxal to acetol. The chain is Methylglyoxal reductase DkgB from Salmonella typhi.